The chain runs to 90 residues: Probable Fe(2+)-trafficking protein (90 aa).

The protein belongs to the Fe(2+)-trafficking protein family.

Functionally, could be a mediator in iron transactions between iron acquisition and iron-requiring processes, such as synthesis and/or repair of Fe-S clusters in biosynthetic enzymes. The chain is Probable Fe(2+)-trafficking protein from Coxiella burnetii (strain CbuG_Q212) (Coxiella burnetii (strain Q212)).